A 227-amino-acid polypeptide reads, in one-letter code: Putative ankyrin repeat protein L45 (227 aa).

ANK repeat units lie at residues 38–66 (FETNIIEYVVENNLLDILRHIIFLKNINH), 78–107 (CLEESLNASCKNGKLEIVKLLVDLGANIFH), 108–137 (NENCAMMLASEYGHIEIVEYLVSKGSDVRA), 139–167 (NDYAVIYASKNGHLEIVKYLVSQGCDVRS), 168–197 (CDSYAVRLASEYGHLEIVKFLVKKGANYRA), and 199–227 (NHHAVIEASKNKHYEIVEFLMNYSTGITK).

This Acanthamoeba polyphaga mimivirus (APMV) protein is Putative ankyrin repeat protein L45.